Consider the following 121-residue polypeptide: Large ribosomal subunit protein uL22c (121 aa).

It belongs to the universal ribosomal protein uL22 family. Part of the 50S ribosomal subunit.

It is found in the plastid. The protein localises to the chloroplast. This protein binds specifically to 23S rRNA. In terms of biological role, the globular domain of the protein is located near the polypeptide exit tunnel on the outside of the subunit, while an extended beta-hairpin is found that lines the wall of the exit tunnel in the center of the 70S ribosome. This chain is Large ribosomal subunit protein uL22c (rpl22), found in Lemna minor (Common duckweed).